The sequence spans 314 residues: Vacuolar membrane protein SCRG_03194 (314 aa).

The interval 32–60 (KPTSSVVSETSSKSLPSLTSSAFSTSSGA) is disordered. Residues 93–113 (VYIAVGAVIGAIFISILIWWL) form a helical membrane-spanning segment. Residues Ser-148, Ser-254, and Ser-274 each carry the phosphoserine modification. Residues 240–309 (EERKLNLNRP…PSMFLDDVLN (70 aa)) form a disordered region. Positions 254–269 (SPERKEKKINSMEGYH) are enriched in basic and acidic residues.

The protein belongs to the PRM5 family.

It localises to the vacuole membrane. This Saccharomyces cerevisiae (strain RM11-1a) (Baker's yeast) protein is Vacuolar membrane protein SCRG_03194.